Here is a 233-residue protein sequence, read N- to C-terminus: 3,4-dihydroxy-2-butanone 4-phosphate synthase (233 aa).

Residue Glu-37 coordinates Mg(2+). Position 37 (Glu-37) interacts with Mn(2+). Residue Asp-41 coordinates D-ribulose 5-phosphate. S-glutathionyl cysteine is present on Cys-66. D-ribulose 5-phosphate-binding positions include Thr-92 and 150 to 154 (RRGHT). Residue His-153 coordinates Mg(2+). His-153 is a Mn(2+) binding site.

As to quaternary structure, homodimer. Requires Mg(2+) as cofactor. Mn(2+) serves as cofactor. S-glutathionylation is reversible and dependent on a glutaredoxin.

It catalyses the reaction D-ribulose 5-phosphate = (2S)-2-hydroxy-3-oxobutyl phosphate + formate + H(+). Its pathway is cofactor biosynthesis; riboflavin biosynthesis; 2-hydroxy-3-oxobutyl phosphate from D-ribulose 5-phosphate: step 1/1. Its function is as follows. Catalyzes the conversion of D-ribulose 5-phosphate to formate and 3,4-dihydroxy-2-butanone 4-phosphate. This is 3,4-dihydroxy-2-butanone 4-phosphate synthase (RIB3) from Pyricularia oryzae (strain 70-15 / ATCC MYA-4617 / FGSC 8958) (Rice blast fungus).